Reading from the N-terminus, the 557-residue chain is Dihydroxy-acid dehydratase (557 aa).

Residue Cys47 coordinates [2Fe-2S] cluster. A Mg(2+)-binding site is contributed by Asp79. Residue Cys120 coordinates [2Fe-2S] cluster. The Mg(2+) site is built by Asp121 and Lys122. Lys122 is modified (N6-carboxylysine). Cys192 contacts [2Fe-2S] cluster. Residue Glu444 coordinates Mg(2+). Residue Ser470 is the Proton acceptor of the active site.

Belongs to the IlvD/Edd family. In terms of assembly, homodimer. [2Fe-2S] cluster serves as cofactor. The cofactor is Mg(2+).

It catalyses the reaction (2R)-2,3-dihydroxy-3-methylbutanoate = 3-methyl-2-oxobutanoate + H2O. The enzyme catalyses (2R,3R)-2,3-dihydroxy-3-methylpentanoate = (S)-3-methyl-2-oxopentanoate + H2O. It participates in amino-acid biosynthesis; L-isoleucine biosynthesis; L-isoleucine from 2-oxobutanoate: step 3/4. It functions in the pathway amino-acid biosynthesis; L-valine biosynthesis; L-valine from pyruvate: step 3/4. In terms of biological role, functions in the biosynthesis of branched-chain amino acids. Catalyzes the dehydration of (2R,3R)-2,3-dihydroxy-3-methylpentanoate (2,3-dihydroxy-3-methylvalerate) into 2-oxo-3-methylpentanoate (2-oxo-3-methylvalerate) and of (2R)-2,3-dihydroxy-3-methylbutanoate (2,3-dihydroxyisovalerate) into 2-oxo-3-methylbutanoate (2-oxoisovalerate), the penultimate precursor to L-isoleucine and L-valine, respectively. This chain is Dihydroxy-acid dehydratase, found in Synechococcus sp. (strain CC9605).